We begin with the raw amino-acid sequence, 525 residues long: GMP synthase [glutamine-hydrolyzing] (525 aa).

One can recognise a Glutamine amidotransferase type-1 domain in the interval 16–205 (PVLVVDFGAQ…LHDFAGLGAD (190 aa)). The active-site Nucleophile is cysteine 93. Catalysis depends on residues histidine 179 and glutamate 181. Residues 206 to 399 (WTAANIAGVL…LGLPEEIVAR (194 aa)) form the GMPS ATP-PPase domain. Position 233 to 239 (233 to 239 (SGGVDSA)) interacts with ATP.

As to quaternary structure, homodimer.

The catalysed reaction is XMP + L-glutamine + ATP + H2O = GMP + L-glutamate + AMP + diphosphate + 2 H(+). The protein operates within purine metabolism; GMP biosynthesis; GMP from XMP (L-Gln route): step 1/1. In terms of biological role, catalyzes the synthesis of GMP from XMP. The polypeptide is GMP synthase [glutamine-hydrolyzing] (Mycolicibacterium paratuberculosis (strain ATCC BAA-968 / K-10) (Mycobacterium paratuberculosis)).